The sequence spans 349 residues: AdoMet-dependent heme synthase (349 aa).

The Radical SAM core domain occupies 5–214 (TNAPRLIAWE…LHWFYEMQKE (210 aa)). [4Fe-4S] cluster is bound by residues cysteine 19, cysteine 23, and cysteine 26.

This sequence belongs to the radical SAM superfamily. It depends on [4Fe-4S] cluster as a cofactor.

It carries out the reaction Fe-coproporphyrin III + 2 S-adenosyl-L-methionine = heme b + 2 5'-deoxyadenosine + 2 L-methionine + 2 CO2. Its pathway is porphyrin-containing compound metabolism; protoheme biosynthesis. In terms of biological role, involved in siroheme-dependent heme b biosynthesis. Catalyzes the conversion of Fe-coproporphyrin III into heme by the oxidative decarboxylation of two propionate side chains. This is AdoMet-dependent heme synthase from Methanosarcina barkeri (strain Fusaro / DSM 804).